A 110-amino-acid polypeptide reads, in one-letter code: Phosphoribosyl-AMP cyclohydrolase (110 aa).

Residue aspartate 80 participates in Mg(2+) binding. Position 81 (cysteine 81) interacts with Zn(2+). The Mg(2+) site is built by aspartate 82 and aspartate 84. Positions 97 and 104 each coordinate Zn(2+).

The protein belongs to the PRA-CH family. Homodimer. Mg(2+) is required as a cofactor. It depends on Zn(2+) as a cofactor.

It localises to the cytoplasm. It catalyses the reaction 1-(5-phospho-beta-D-ribosyl)-5'-AMP + H2O = 1-(5-phospho-beta-D-ribosyl)-5-[(5-phospho-beta-D-ribosylamino)methylideneamino]imidazole-4-carboxamide. It participates in amino-acid biosynthesis; L-histidine biosynthesis; L-histidine from 5-phospho-alpha-D-ribose 1-diphosphate: step 3/9. Its function is as follows. Catalyzes the hydrolysis of the adenine ring of phosphoribosyl-AMP. This chain is Phosphoribosyl-AMP cyclohydrolase, found in Clostridium botulinum (strain 657 / Type Ba4).